Reading from the N-terminus, the 472-residue chain is F420-non-reducing hydrogenase subunit A (472 aa).

Residues Cys-61, Cys-64, Cys-442, and Cys-445 each contribute to the Ni(2+) site.

This sequence belongs to the [NiFe]/[NiFeSe] hydrogenase large subunit family. The F420-non-reducing hydrogenase is composed of three subunits; MvhA, MvhD and MvhG. It forms a complex with the heterodisulfide reductase (hdr). Ni(2+) serves as cofactor.

In terms of biological role, part of a complex that provides reducing equivalents for heterodisulfide reductase. In Methanothermobacter marburgensis (strain ATCC BAA-927 / DSM 2133 / JCM 14651 / NBRC 100331 / OCM 82 / Marburg) (Methanobacterium thermoautotrophicum), this protein is F420-non-reducing hydrogenase subunit A (mvhA).